We begin with the raw amino-acid sequence, 332 residues long: Biotin synthase (332 aa).

One can recognise a Radical SAM core domain in the interval 51–279 (YKVQLASLLS…RSRVRLSAGR (229 aa)). Residues Cys66, Cys70, and Cys73 each coordinate [4Fe-4S] cluster. Residues Cys110, Cys142, Cys202, and Arg274 each contribute to the [2Fe-2S] cluster site.

Belongs to the radical SAM superfamily. Biotin synthase family. As to quaternary structure, homodimer. Requires [4Fe-4S] cluster as cofactor. It depends on [2Fe-2S] cluster as a cofactor.

The enzyme catalyses (4R,5S)-dethiobiotin + (sulfur carrier)-SH + 2 reduced [2Fe-2S]-[ferredoxin] + 2 S-adenosyl-L-methionine = (sulfur carrier)-H + biotin + 2 5'-deoxyadenosine + 2 L-methionine + 2 oxidized [2Fe-2S]-[ferredoxin]. It participates in cofactor biosynthesis; biotin biosynthesis; biotin from 7,8-diaminononanoate: step 2/2. Its function is as follows. Catalyzes the conversion of dethiobiotin (DTB) to biotin by the insertion of a sulfur atom into dethiobiotin via a radical-based mechanism. The chain is Biotin synthase from Prochlorococcus marinus (strain SARG / CCMP1375 / SS120).